A 143-amino-acid polypeptide reads, in one-letter code: Hypoxic response protein 1 (143 aa).

2 CBS domains span residues 8–65 (MNAG…GLDP) and 73–131 (LARD…IVQF). Cys-14 and Cys-39 are oxidised to a cystine. Positions 97 and 122 each coordinate Zn(2+).

In terms of assembly, homodimer.

The protein resides in the secreted. In terms of biological role, unlike some other CBS-domain containing proteins does not seem to bind AMP. The sequence is that of Hypoxic response protein 1 (hrp1) from Mycobacterium tuberculosis (strain CDC 1551 / Oshkosh).